A 70-amino-acid chain; its full sequence is NADH dehydrogenase [ubiquinone] 1 alpha subcomplex subunit 1 (70 aa).

A helical transmembrane segment spans residues 1–21 (MWFEILPGLAIMGVCLVIPGV).

This sequence belongs to the complex I NDUFA1 subunit family. As to quaternary structure, complex I is composed of 45 different subunits.

It is found in the mitochondrion inner membrane. Accessory subunit of the mitochondrial membrane respiratory chain NADH dehydrogenase (Complex I), that is believed not to be involved in catalysis. Complex I functions in the transfer of electrons from NADH to the respiratory chain. The immediate electron acceptor for the enzyme is believed to be ubiquinone. This is NADH dehydrogenase [ubiquinone] 1 alpha subcomplex subunit 1 (Ndufa1) from Mus musculus (Mouse).